We begin with the raw amino-acid sequence, 435 residues long: 5-methylthioadenosine/S-adenosylhomocysteine deaminase (435 aa).

The Zn(2+) site is built by H65 and H67. Residues E94, R150, and H189 each contribute to the substrate site. A Zn(2+)-binding site is contributed by H216. Substrate contacts are provided by E219 and D304. D304 contributes to the Zn(2+) binding site.

It belongs to the metallo-dependent hydrolases superfamily. MTA/SAH deaminase family. The cofactor is Zn(2+).

The catalysed reaction is S-adenosyl-L-homocysteine + H2O + H(+) = S-inosyl-L-homocysteine + NH4(+). The enzyme catalyses S-methyl-5'-thioadenosine + H2O + H(+) = S-methyl-5'-thioinosine + NH4(+). Functionally, catalyzes the deamination of 5-methylthioadenosine and S-adenosyl-L-homocysteine into 5-methylthioinosine and S-inosyl-L-homocysteine, respectively. Is also able to deaminate adenosine. This is 5-methylthioadenosine/S-adenosylhomocysteine deaminase from Bacillus cereus (strain B4264).